We begin with the raw amino-acid sequence, 276 residues long: Dermonecrotic toxin LvSicTox-alphaII1 (276 aa).

The active site involves His5. Positions 25 and 27 each coordinate Mg(2+). The active-site Nucleophile is the His41. 2 disulfide bridges follow: Cys45-Cys51 and Cys47-Cys193. Position 85 (Asp85) interacts with Mg(2+).

This sequence belongs to the arthropod phospholipase D family. Class II subfamily. Mg(2+) serves as cofactor. Expressed by the venom gland.

It is found in the secreted. It carries out the reaction an N-(acyl)-sphingosylphosphocholine = an N-(acyl)-sphingosyl-1,3-cyclic phosphate + choline. The enzyme catalyses an N-(acyl)-sphingosylphosphoethanolamine = an N-(acyl)-sphingosyl-1,3-cyclic phosphate + ethanolamine. It catalyses the reaction a 1-acyl-sn-glycero-3-phosphocholine = a 1-acyl-sn-glycero-2,3-cyclic phosphate + choline. The catalysed reaction is a 1-acyl-sn-glycero-3-phosphoethanolamine = a 1-acyl-sn-glycero-2,3-cyclic phosphate + ethanolamine. Functionally, dermonecrotic toxins cleave the phosphodiester linkage between the phosphate and headgroup of certain phospholipids (sphingolipid and lysolipid substrates), forming an alcohol (often choline) and a cyclic phosphate. This toxin acts on sphingomyelin (SM). It may also act on ceramide phosphoethanolamine (CPE), lysophosphatidylcholine (LPC) and lysophosphatidylethanolamine (LPE), but not on lysophosphatidylserine (LPS), and lysophosphatidylglycerol (LPG). It acts by transphosphatidylation, releasing exclusively cyclic phosphate products as second products. Induces dermonecrosis, hemolysis, increased vascular permeability, edema, inflammatory response, and platelet aggregation. The sequence is that of Dermonecrotic toxin LvSicTox-alphaII1 from Loxosceles variegata (Recluse spider).